The following is a 166-amino-acid chain: Eukaryotic translation initiation factor 5A (166 aa).

A Hypusine modification is found at Lys-52. Residues 99–125 (DREDPSKPAHLSLMDDEGETRDNLDMP) form a disordered region.

The protein belongs to the eIF-5A family. In terms of processing, lys-52 undergoes hypusination, a unique post-translational modification that consists in the addition of a butylamino group from spermidine to lysine side chain, leading to the formation of the unusual amino acid hypusine. eIF-5As are the only known proteins to undergo this modification, which is essential for their function. Hypusination is mediated by the consecutive action of deoxyhypusine synthase DHSc and deoxyhypusine hydroxylase DOHH.

Its subcellular location is the cytoplasm. Translation factor that promotes translation elongation and termination, particularly upon ribosome stalling at specific amino acid sequence contexts. Binds between the exit (E) and peptidyl (P) site of the ribosome and promotes rescue of stalled ribosome: specifically required for efficient translation of polyproline-containing peptides as well as other motifs that stall the ribosome. Acts as a ribosome quality control (RQC) cofactor by joining the RQC complex to facilitate peptidyl transfer during CAT tailing step. Required for cell growth during both bloodstream (BF) and insect procyclic (PF) life cycle stages and for survival of the bloodstream form. The chain is Eukaryotic translation initiation factor 5A from Trypanosoma brucei brucei (strain 927/4 GUTat10.1).